Consider the following 210-residue polypeptide: ATP-dependent Clp protease proteolytic subunit (210 aa).

The active-site Nucleophile is the Ser-106. His-131 is a catalytic residue.

The protein belongs to the peptidase S14 family. As to quaternary structure, fourteen ClpP subunits assemble into 2 heptameric rings which stack back to back to give a disk-like structure with a central cavity, resembling the structure of eukaryotic proteasomes.

The protein resides in the cytoplasm. The enzyme catalyses Hydrolysis of proteins to small peptides in the presence of ATP and magnesium. alpha-casein is the usual test substrate. In the absence of ATP, only oligopeptides shorter than five residues are hydrolyzed (such as succinyl-Leu-Tyr-|-NHMec, and Leu-Tyr-Leu-|-Tyr-Trp, in which cleavage of the -Tyr-|-Leu- and -Tyr-|-Trp bonds also occurs).. Its function is as follows. Cleaves peptides in various proteins in a process that requires ATP hydrolysis. Has a chymotrypsin-like activity. Plays a major role in the degradation of misfolded proteins. In Bartonella henselae (strain ATCC 49882 / DSM 28221 / CCUG 30454 / Houston 1) (Rochalimaea henselae), this protein is ATP-dependent Clp protease proteolytic subunit.